The following is a 1632-amino-acid chain: MQPKDYMSSSHANWENIQIDSFTSWINQHLSERGLSVKDLSVDFQDGVLLLNLLEILSGKKIARYVRSPKFLQHKIDNIMIAFNFMEKAFDIKVFGCNAKDIVDGNLKQTMGVIFLLIQKIKVNLHLDHLQEQQGETTGTTTTITSTNTTTTPTKPRFYRASMQVNAANRFSHISPNKDQSSSTVATTTTTSTSVVQPQPQPTTATPTTTTATTLTPPVASQQPVSTAPATVTPSTVIPTVTPLNTTTTTTTATSTSTNVPTATTNVPPTATTTTTGTRISPTTGVSVSTIRSKFLFEGGTGNTTGGNEKYNTYSPGSGNTSGVVGPSTSSSLNISSERVLKRTESGYLISGGLSLSGSGSGGIHEPLQRTVSLIEIKLNDHQSKFYDLKKIIFMQSVIRGYLVRSKWRNVLEKYKQHLNEYKKHFMNNKKAYRGLIRVQAIVKGKIQRKKLFKMFPLYRRNEIVKEILSTEDKYVTSLAMVTTHYLKPSEAFLSTQQVRSIFSQIEIIHRYNSLILEKLVSRNKIWYSSGQKIGDIFIEMSAFLKVYTIYVNNYNNSIQTITECMEIPKFASLLEKNRNQFGLDLSAFLIAPIQRIPRYILLLQDLLKNTKESHPDHQDLSLALKKMKDVAEYVNEKKREAENLNQVLTIQSSLTGKFNNLAEPHRRYVKKGTLISNDKIHLYFLFNDLLVKTENKIVSKIRDSARLSNNNSSDKNSKSTFHSPKEIINEGKSKYLNSYFLAGSSLVDSNPDGFTFQIIGVGDANELNSQINNQINNQNNNQNNNQNNNLNNNNDDSPILSFSPFSSSFASTITNSLSSIGNSNNVNNNNNTSSNSGFVNSSNNNINIVNSNGSSPLTNSGHGLNSSFGISSNNNNNLTMPTTSIQLEALSLNEKMTWMGELDECIFQLLEKSKSKKRSLITDADELTTVPFDISVVKDSEFSNVLEKKHSEISWRSKKFYLKNTHLYYHRYSSTESPKEPTKIKCINLILCSVKLAQVVDHPHCFQLITPSRIYFFSCEDSTVLFQWISLIRLSIKKKLESLKDENNNINNFTSIASATSPTSSSSNTTPIVVPIASHSNATGSLSASLGSSFLNQQQRSLEQQQHLNTSNSNLTPLALSSQVLYHINNFISTSTSTSASQSQSQSPSPSPSHSINQKQKIRKLSFYQSRSNTLININNDEDRLNSFPTSTLSVSCLLNNDNHGNNDFDGKSFTNNIDITTTTTTNDDNNNNTTTTQVKKGKDLSCSKELNCSISHDDNSKGSSGYGNNSCGDNINNDESNNNCAECGASDPSWVSINYGVVVCLDCSSIHKNLPEGNVKSVRSLSVAFSDIVKKQEGNIKANNKYEKNIPSGLTKPNPKDSYEIKLSWIKAKYINNNNNNNNSQNGDSTTPTPTPTSTTIHVNNDSTPTSPNLNSQSSPPPTATTTQTENVKLDNGRSSPTPTPTQTENNNNNVLTPTTTTTNTTTSTTTGSRPTTPTILNNEEEHIQGINLKDSTDTSNGKGTWSRGSSHAITERKTSFLDKPRVPVKKEHQGYLFKTSSPTSNNSSDWKKYLFVYKNDVLTYYKVSKKNKRKEKGIIDLFHSVKQESRPKQKYSFTLVTSQRLYFLASETEEEMKIWLDVLSSHTTH.

In terms of domain architecture, Calponin-homology (CH) spans 16 to 122 (NIQIDSFTSW…VIFLLIQKIK (107 aa)). Disordered regions lie at residues 134 to 155 (QGET…TPTK) and 171 to 285 (FSHI…PTTG). Low complexity-rich tracts occupy residues 137 to 154 (TTGT…TTPT) and 180 to 284 (QSSS…SPTT). 2 consecutive IQ domains span residues 388–417 (DLKK…KYKQ) and 432–461 (AYRG…LYRR). A DH domain is found at 460–638 (RRNEIVKEIL…KDVAEYVNEK (179 aa)). Positions 775-795 (QINNQNNNQNNNQNNNLNNNN) are enriched in low complexity. Residues 775–798 (QINNQNNNQNNNQNNNLNNNNDDS) form a disordered region. The 99-residue stretch at 940-1038 (DSEFSNVLEK…WISLIRLSIK (99 aa)) folds into the PH 1 domain. The segment covering 1138 to 1156 (STSASQSQSQSPSPSPSHS) has biased composition (low complexity). The interval 1138 to 1161 (STSASQSQSQSPSPSPSHSINQKQ) is disordered. The 119-residue stretch at 1271 to 1389 (NSCGDNINND…NNNNNNSQNG (119 aa)) folds into the Arf-GAP domain. The C4-type zinc finger occupies 1286–1309 (CAECGASDPSWVSINYGVVVCLDC). Composition is skewed to low complexity over residues 1380-1402 (NNNN…TSTT), 1409-1431 (STPT…TTQT), and 1441-1481 (SSPT…TTPT). Positions 1380 to 1521 (NNNNNNSQNG…SSHAITERKT (142 aa)) are disordered. Polar residues predominate over residues 1500–1515 (DTSNGKGTWSRGSSHA). Positions 1532–1631 (KKEHQGYLFK…WLDVLSSHTT (100 aa)) constitute a PH 2 domain.

It localises to the membrane. The protein resides in the cytoplasmic vesicle. It is found in the phagosome membrane. In terms of biological role, GTPase-activating protein for Rac involved in streaming and development. The chain is Guanine exchange factor for Rac 30 (gxcDD) from Dictyostelium discoideum (Social amoeba).